Here is a 367-residue protein sequence, read N- to C-terminus: Beta sliding clamp (367 aa).

It belongs to the beta sliding clamp family. As to quaternary structure, forms a ring-shaped head-to-tail homodimer around DNA which binds and tethers DNA polymerases and other proteins to the DNA. The DNA replisome complex has a single clamp-loading complex (3 tau and 1 each of delta, delta', psi and chi subunits) which binds 3 Pol III cores (1 core on the leading strand and 2 on the lagging strand) each with a beta sliding clamp dimer. Additional proteins in the replisome are other copies of gamma, psi and chi, Ssb, DNA helicase and RNA primase.

The protein resides in the cytoplasm. Functionally, confers DNA tethering and processivity to DNA polymerases and other proteins. Acts as a clamp, forming a ring around DNA (a reaction catalyzed by the clamp-loading complex) which diffuses in an ATP-independent manner freely and bidirectionally along dsDNA. Initially characterized for its ability to contact the catalytic subunit of DNA polymerase III (Pol III), a complex, multichain enzyme responsible for most of the replicative synthesis in bacteria; Pol III exhibits 3'-5' exonuclease proofreading activity. The beta chain is required for initiation of replication as well as for processivity of DNA replication. In Pseudomonas putida (strain ATCC 47054 / DSM 6125 / CFBP 8728 / NCIMB 11950 / KT2440), this protein is Beta sliding clamp (dnaN).